Reading from the N-terminus, the 209-residue chain is Uracil phosphoribosyltransferase (209 aa).

Residues R79, R104, and 131 to 139 (DPMLATGNS) each bind 5-phospho-alpha-D-ribose 1-diphosphate. Residues I194 and 199–201 (GDA) contribute to the uracil site. A 5-phospho-alpha-D-ribose 1-diphosphate-binding site is contributed by D200.

Belongs to the UPRTase family. Requires Mg(2+) as cofactor.

It catalyses the reaction UMP + diphosphate = 5-phospho-alpha-D-ribose 1-diphosphate + uracil. Its pathway is pyrimidine metabolism; UMP biosynthesis via salvage pathway; UMP from uracil: step 1/1. Its activity is regulated as follows. Allosterically activated by GTP. In terms of biological role, catalyzes the conversion of uracil and 5-phospho-alpha-D-ribose 1-diphosphate (PRPP) to UMP and diphosphate. This Agrobacterium fabrum (strain C58 / ATCC 33970) (Agrobacterium tumefaciens (strain C58)) protein is Uracil phosphoribosyltransferase.